The primary structure comprises 158 residues: NAD(P)H-quinone oxidoreductase subunit J, chloroplastic (158 aa).

This sequence belongs to the complex I 30 kDa subunit family. NDH is composed of at least 16 different subunits, 5 of which are encoded in the nucleus.

The protein localises to the plastid. It is found in the chloroplast thylakoid membrane. It catalyses the reaction a plastoquinone + NADH + (n+1) H(+)(in) = a plastoquinol + NAD(+) + n H(+)(out). It carries out the reaction a plastoquinone + NADPH + (n+1) H(+)(in) = a plastoquinol + NADP(+) + n H(+)(out). NDH shuttles electrons from NAD(P)H:plastoquinone, via FMN and iron-sulfur (Fe-S) centers, to quinones in the photosynthetic chain and possibly in a chloroplast respiratory chain. The immediate electron acceptor for the enzyme in this species is believed to be plastoquinone. Couples the redox reaction to proton translocation, and thus conserves the redox energy in a proton gradient. The sequence is that of NAD(P)H-quinone oxidoreductase subunit J, chloroplastic from Spinacia oleracea (Spinach).